Consider the following 634-residue polypeptide: Threonine--tRNA ligase (634 aa).

Positions 1 to 61 (MINITLPDGS…DHDASLRIIT (61 aa)) constitute a TGS domain. Residues 243–534 (DHRRIGKAQD…LIEHHAGAFP (292 aa)) form a catalytic region. Residues C334, H385, and H511 each coordinate Zn(2+).

The protein belongs to the class-II aminoacyl-tRNA synthetase family. As to quaternary structure, homodimer. It depends on Zn(2+) as a cofactor.

The protein resides in the cytoplasm. The catalysed reaction is tRNA(Thr) + L-threonine + ATP = L-threonyl-tRNA(Thr) + AMP + diphosphate + H(+). In terms of biological role, catalyzes the attachment of threonine to tRNA(Thr) in a two-step reaction: L-threonine is first activated by ATP to form Thr-AMP and then transferred to the acceptor end of tRNA(Thr). Also edits incorrectly charged L-seryl-tRNA(Thr). The chain is Threonine--tRNA ligase from Xanthomonas axonopodis pv. citri (strain 306).